A 37-amino-acid chain; its full sequence is Cytochrome b6-f complex subunit 5 (37 aa).

A helical membrane pass occupies residues 5-25; sequence FLFGIVLGLIPITLAGLFVTA.

This sequence belongs to the PetG family. As to quaternary structure, the 4 large subunits of the cytochrome b6-f complex are cytochrome b6, subunit IV (17 kDa polypeptide, PetD), cytochrome f and the Rieske protein, while the 4 small subunits are PetG, PetL, PetM and PetN. The complex functions as a dimer.

The protein resides in the plastid. It is found in the chloroplast thylakoid membrane. Component of the cytochrome b6-f complex, which mediates electron transfer between photosystem II (PSII) and photosystem I (PSI), cyclic electron flow around PSI, and state transitions. PetG is required for either the stability or assembly of the cytochrome b6-f complex. The chain is Cytochrome b6-f complex subunit 5 from Solanum lycopersicum (Tomato).